A 212-amino-acid chain; its full sequence is Calaxin (212 aa).

3 consecutive EF-hand domains span residues 65–100 (TDDMIMDRVFRGFDKDNDGCISVTEWVYGLSVFLRG), 101–136 (TLEEKMKYCFEVFDLNGDSFISKEEMFHMLKNSLLK), and 146–181 (GIKDLVEITLKKMDHDHDGKLSFADYEQAVREETLL). Residues Asp78, Asp80, Asp82, Cys84, Glu89, Asp114, Asn116, Asp118, Glu125, Asp159, Asp161, Asp163, Lys165, and Asp170 each contribute to the Ca(2+) site.

Component of the outer dynein arm-docking complex along with ODAD1, ODAD2, ODAD3 and ODAD4. As to expression, expressed in trachea multiciliated cells.

The protein resides in the cytoplasm. Its subcellular location is the cytoskeleton. It localises to the cilium axoneme. It is found in the cell projection. The protein localises to the cilium. The protein resides in the flagellum. Its function is as follows. Component of the outer dynein arm-docking complex (ODA-DC) that mediates outer dynein arms (ODA) binding onto the doublet microtubule. Seems to regulate the assembly of both ODAs and their axonemal docking complex onto ciliary microtubules. Regulates ciliary and flagellar motility and is required for cilia-driven determination of body laterality. In Bos taurus (Bovine), this protein is Calaxin (CLXN).